Here is a 209-residue protein sequence, read N- to C-terminus: Kynurenine formamidase (209 aa).

Phenylalanine 18 contacts substrate. Residues histidine 48, histidine 52, and aspartate 54 each contribute to the Zn(2+) site. Histidine 58 acts as the Proton donor/acceptor in catalysis. Zn(2+) contacts are provided by histidine 160 and glutamate 172.

This sequence belongs to the Cyclase 1 superfamily. KynB family. Homodimer. Requires Zn(2+) as cofactor.

The catalysed reaction is N-formyl-L-kynurenine + H2O = L-kynurenine + formate + H(+). Its pathway is amino-acid degradation; L-tryptophan degradation via kynurenine pathway; L-kynurenine from L-tryptophan: step 2/2. Catalyzes the hydrolysis of N-formyl-L-kynurenine to L-kynurenine, the second step in the kynurenine pathway of tryptophan degradation. This chain is Kynurenine formamidase, found in Bordetella petrii (strain ATCC BAA-461 / DSM 12804 / CCUG 43448).